The sequence spans 79 residues: Dicentracin (79 aa).

A signal peptide spans 1 to 22 (MKCATLFLVLSMVVLMAEPGDA). Glycine 44 carries the post-translational modification Glycine amide. Residues 47 to 79 (AQQDQQDQQYQQDQQDQQAEQYQRFNRERAAFD) constitute a propeptide that is removed on maturation. Residues 48–67 (QQDQQDQQYQQDQQDQQAEQ) form a disordered region.

The protein belongs to the pleurocidin family.

The protein localises to the secreted. This Dicentrarchus labrax (European seabass) protein is Dicentracin.